The sequence spans 346 residues: UDP-3-O-acylglucosamine N-acyltransferase (346 aa).

The Proton acceptor role is filled by His240.

This sequence belongs to the transferase hexapeptide repeat family. LpxD subfamily. As to quaternary structure, homotrimer.

It carries out the reaction a UDP-3-O-[(3R)-3-hydroxyacyl]-alpha-D-glucosamine + a (3R)-hydroxyacyl-[ACP] = a UDP-2-N,3-O-bis[(3R)-3-hydroxyacyl]-alpha-D-glucosamine + holo-[ACP] + H(+). It functions in the pathway bacterial outer membrane biogenesis; LPS lipid A biosynthesis. Functionally, catalyzes the N-acylation of UDP-3-O-acylglucosamine using 3-hydroxyacyl-ACP as the acyl donor. Is involved in the biosynthesis of lipid A, a phosphorylated glycolipid that anchors the lipopolysaccharide to the outer membrane of the cell. The polypeptide is UDP-3-O-acylglucosamine N-acyltransferase (Phocaeicola vulgatus (strain ATCC 8482 / DSM 1447 / JCM 5826 / CCUG 4940 / NBRC 14291 / NCTC 11154) (Bacteroides vulgatus)).